The following is a 150-amino-acid chain: UPF0756 membrane protein Asuc_1151 (150 aa).

4 helical membrane-spanning segments follow: residues methionine 1 to leucine 21, tyrosine 52 to glycine 72, leucine 82 to glycine 102, and isoleucine 123 to leucine 143.

It belongs to the UPF0756 family.

Its subcellular location is the cell membrane. In Actinobacillus succinogenes (strain ATCC 55618 / DSM 22257 / CCUG 43843 / 130Z), this protein is UPF0756 membrane protein Asuc_1151.